The primary structure comprises 92 residues: Small ribosomal subunit protein uS19 (92 aa).

Belongs to the universal ribosomal protein uS19 family.

Its function is as follows. Protein S19 forms a complex with S13 that binds strongly to the 16S ribosomal RNA. This Lysinibacillus sphaericus (strain C3-41) protein is Small ribosomal subunit protein uS19.